Here is a 685-residue protein sequence, read N- to C-terminus: Putative alpha-1,3-mannosyltransferase MNN14 (685 aa).

Residues 1–13 (MGLLSIPYQSKSK) lie on the Cytoplasmic side of the membrane. The helical transmembrane segment at 14–34 (LWIAIFLVVWSLISMHFIWQS) threads the bilayer. The Lumenal segment spans residues 35–685 (QANSGLILKN…EIWMRGYNYL (651 aa)). 4 N-linked (GlcNAc...) asparagine glycosylation sites follow: Asn199, Asn338, Asn408, and Asn556.

Belongs to the MNN1/MNT family.

It localises to the golgi apparatus membrane. It participates in protein modification; protein glycosylation. Responsible for addition of the terminal mannose residues to the outer chain of core N-linked polysaccharides and to O-linked mannotriose. Implicated in late Golgi modifications. Involved in virulence. The chain is Putative alpha-1,3-mannosyltransferase MNN14 (MNN14) from Candida albicans (strain SC5314 / ATCC MYA-2876) (Yeast).